The primary structure comprises 142 residues: Hemoglobin A subunit alpha-1 (142 aa).

One can recognise a Globin domain in the interval 2-142; the sequence is VLTAGDKANV…VATALTSKYR (141 aa). Histidine 59 provides a ligand contact to O2. Histidine 88 lines the heme b pocket.

Belongs to the globin family. Tetramer of alpha-1, alpha-2 and two identical beta chains. In terms of tissue distribution, red blood cells.

Its function is as follows. Involved in oxygen transport from the lung to the various peripheral tissues. In Aldabrachelys gigantea (Aldabra giant tortoise), this protein is Hemoglobin A subunit alpha-1.